A 204-amino-acid polypeptide reads, in one-letter code: Ribosomal RNA small subunit methyltransferase J (204 aa).

S-adenosyl-L-methionine-binding positions include 55 to 56, 71 to 72, and Asp123; these read RD and ER.

The protein belongs to the methyltransferase superfamily. RsmJ family.

The protein localises to the cytoplasm. The catalysed reaction is guanosine(1516) in 16S rRNA + S-adenosyl-L-methionine = N(2)-methylguanosine(1516) in 16S rRNA + S-adenosyl-L-homocysteine + H(+). Functionally, specifically methylates the guanosine in position 1516 of 16S rRNA. The polypeptide is Ribosomal RNA small subunit methyltransferase J (Rhodopseudomonas palustris (strain TIE-1)).